The following is a 467-amino-acid chain: Neutral protease 2 homolog NFIA_031120 (467 aa).

The signal sequence occupies residues 1–19; that stretch reads MKITALASAILAVVHGALA. Residues 20–172 constitute a propeptide that is removed on maturation; that stretch reads LPARAPALDI…PASIKPLDRR (153 aa). Intrachain disulfides connect C179–C251 and C258–C276. H300 is a Zn(2+) binding site. E301 is an active-site residue. The Zn(2+) site is built by H304 and D315. Residues 359 to 451 are compositionally biased toward polar residues; that stretch reads WDGNSQPGQT…TMWDGSSEPG (93 aa). Positions 359 to 467 are disordered; sequence WDGNSQPGQT…HTTWGNFYQA (109 aa).

It belongs to the peptidase M35 family. It depends on Zn(2+) as a cofactor.

It is found in the secreted. The catalysed reaction is Preferential cleavage of bonds with hydrophobic residues in P1'. Also 3-Asn-|-Gln-4 and 8-Gly-|-Ser-9 bonds in insulin B chain.. In terms of biological role, secreted metalloproteinase that allows assimilation of proteinaceous substrates. Shows high activities on basic nuclear substrates such as histone and protamine. The protein is Neutral protease 2 homolog NFIA_031120 of Neosartorya fischeri (strain ATCC 1020 / DSM 3700 / CBS 544.65 / FGSC A1164 / JCM 1740 / NRRL 181 / WB 181) (Aspergillus fischerianus).